A 312-amino-acid chain; its full sequence is Plasminogen activator (312 aa).

The first 20 residues, 1–20 (MKKSSIVATIITILSGSANA), serve as a signal peptide directing secretion. Topologically, residues 21–31 (ASSQLIPNISP) are periplasmic. A beta stranded membrane pass occupies residues 32 to 40 (DSFTVAAST). At 41-70 (GMLSGKSHEMLYDAETGRKISQLDWKIKNV) the chain is on the extracellular side. The chain crosses the membrane as a beta stranded span at residues 71–80 (AILKGDISWD). Residues 81 to 84 (PYSF) lie on the Periplasmic side of the membrane. A beta stranded transmembrane segment spans residues 85–94 (LTLNARGWTS). The Extracellular portion of the chain corresponds to 95–131 (LASGSGNMDDYDWMNENQSEWTDHSSHPATNVNHANE). Active-site residues include D104 and D106. The beta stranded transmembrane segment at 132 to 140 (YDLNVKGWL) threads the bilayer. Over 141 to 145 (LQDEN) the chain is Periplasmic. Residues 146-154 (YKAGITAGY) traverse the membrane as a beta stranded segment. At 155–194 (QETRFSWTATGGSYSYNNGAYTGNFPKGVRVIGYNQRFSM) the chain is on the extracellular side. A beta stranded transmembrane segment spans residues 195-204 (PYIGLAGQYR). Residues 205–207 (IND) lie on the Periplasmic side of the membrane. The chain crosses the membrane as a beta stranded span at residues 208–216 (FELNALFKF). Residues 217–244 (SDWVRAHDNDEHYMRDLTFREKTSGSRY) are Extracellular-facing. Residues D226 and H228 contribute to the active site. A beta stranded transmembrane segment spans residues 245–255 (YGTVINAGYYV). Over 256-258 (TPN) the chain is Periplasmic. Residues 259–267 (AKVFAEFTY) traverse the membrane as a beta stranded segment. The Extracellular portion of the chain corresponds to 268-301 (SKYDEGKGGTQTIDKNSGDSVSIGGDAAGISNKN). Residues 302-312 (YTVTAGLQYRF) traverse the membrane as a beta stranded segment.

It belongs to the peptidase A26 family.

It is found in the cell outer membrane. It catalyses the reaction Converts human Glu-plasminogen to plasmin by cleaving the 560-Arg-|-Val-561 peptide bond that is also hydrolyzed by the mammalian u-plasminogen activator and t-plasminogen activator. Also cleaves arginyl bonds in other proteins.. With respect to regulation, requires bacterial lipopolysaccharide (LPS) for activation; addition of LPS to inactive protein reactivates it. In the absence of LPS the active site groove is slightly narrower, and peptide substrate binds deep within the active site groove, displacing the nucleophilic water molecule. Functionally, in the mammalian host activates (cleaves) plasminogen to generate the serine protease plasmin. Plasmin degrades fibrin clots (fibrinolysis) and facilitates bacterial cell migration, enabling rapid dissemination of bacteria from the initial site of infection. Cleaves host plasminogen to generate plasmin and probably also has autocatalytic activity. Fibrinolytic activity prevails at 37 degrees Celsius whereas coagulase expression predominates at lower temperatures (28 degrees Celsius). Cleaves plasminogen; plasminogen cleavage is much higher than coagulase activity. The polypeptide is Plasminogen activator (Yersinia pestis).